The primary structure comprises 462 residues: Argininosuccinate lyase (462 aa).

The protein belongs to the lyase 1 family. Argininosuccinate lyase subfamily.

The protein resides in the cytoplasm. The catalysed reaction is 2-(N(omega)-L-arginino)succinate = fumarate + L-arginine. Its pathway is amino-acid biosynthesis; L-arginine biosynthesis; L-arginine from L-ornithine and carbamoyl phosphate: step 3/3. The chain is Argininosuccinate lyase from Prochlorococcus marinus (strain SARG / CCMP1375 / SS120).